Reading from the N-terminus, the 104-residue chain is Turripeptide OL55 (104 aa).

Post-translationally, contains 8 disulfide bonds. In terms of tissue distribution, expressed by the venom duct.

The protein resides in the secreted. Its function is as follows. Acts as a neurotoxin by inhibiting an ion channel. The polypeptide is Turripeptide OL55 (Iotyrris olangoensis (Sea snail)).